We begin with the raw amino-acid sequence, 431 residues long: Adenylosuccinate synthetase (431 aa).

GTP-binding positions include 12 to 18 and 40 to 42; these read GDEGKGK and GHT. Aspartate 13 functions as the Proton acceptor in the catalytic mechanism. Mg(2+)-binding residues include aspartate 13 and glycine 40. Residues 13-16, 38-41, threonine 130, arginine 144, glutamine 225, threonine 240, and arginine 304 contribute to the IMP site; these read DEGK and NAGH. Histidine 41 acts as the Proton donor in catalysis. A substrate-binding site is contributed by 300–306; that stretch reads ATTGRPR. Residues arginine 306, 332–334, and 414–416 contribute to the GTP site; these read KLD and SVG.

Belongs to the adenylosuccinate synthetase family. In terms of assembly, homodimer. Mg(2+) is required as a cofactor.

It is found in the cytoplasm. It carries out the reaction IMP + L-aspartate + GTP = N(6)-(1,2-dicarboxyethyl)-AMP + GDP + phosphate + 2 H(+). It functions in the pathway purine metabolism; AMP biosynthesis via de novo pathway; AMP from IMP: step 1/2. Its function is as follows. Plays an important role in the de novo pathway of purine nucleotide biosynthesis. Catalyzes the first committed step in the biosynthesis of AMP from IMP. This chain is Adenylosuccinate synthetase, found in Geotalea daltonii (strain DSM 22248 / JCM 15807 / FRC-32) (Geobacter daltonii).